A 428-amino-acid polypeptide reads, in one-letter code: C4-dicarboxylate transport protein (428 aa).

The next 8 helical transmembrane spans lie at 8-28 (VLYVQVIFAIVVGVILGHYYP), 44-64 (LIKMVIGPIIFCTVVTGIAGM), 78-98 (LLYFEIVSTCALVLGLAATHI), 148-168 (GEILQILLIALLFGSVLAHLG), 184-204 (VLFGIVHIVTKLAPIGAFGAM), 222-242 (LIGTFYLTSVVFVLVVLGAIA), 307-327 (IYMTMAVLFIAQATNIELTWM), and 355-375 (AATLAVVPTIPLSGMVLILGI).

This sequence belongs to the dicarboxylate/amino acid:cation symporter (DAACS) (TC 2.A.23) family.

Its subcellular location is the cell inner membrane. Responsible for the transport of dicarboxylates such as succinate, fumarate, and malate from the periplasm across the membrane. This is C4-dicarboxylate transport protein from Burkholderia pseudomallei (strain 1106a).